A 790-amino-acid chain; its full sequence is Cadherin-6 (790 aa).

An N-terminal signal peptide occupies residues 1–18 (MRTYRYFLLLFWVGQPYP). Positions 19–53 (TFSNPLSKRTSGFPAKRKALELSANSRNELSRSKR) are excised as a propeptide. 5 Cadherin domains span residues 54–159 (SWMW…EPIF), 160–268 (TKDV…PPRF), 269–383 (PQST…PPVF), 384–486 (SKLA…DNAP), and 487–608 (EFAE…LIHP). The Extracellular segment spans residues 54 to 615 (SWMWNQFFLL…IHPTGLSTGA (562 aa)). N-linked (GlcNAc...) asparagine glycosylation occurs at Asn255. The tract at residues 260 to 291 (DVNDNPPRFPQSTYQFKTPESSPPGTPIGRIK) is disordered. Residues 269-279 (PQSTYQFKTPE) are compositionally biased toward polar residues. 4 N-linked (GlcNAc...) asparagine glycosylation sites follow: Asn399, Asn437, Asn455, and Asn536. Residues 616-636 (LVAILLCIVILLVTVVLFAAL) traverse the membrane as a helical segment. Over 637-790 (RRQRKKEPLI…YGGMDSDKDS (154 aa)) the chain is Cytoplasmic. Ser786 and Ser790 each carry phosphoserine.

The protein localises to the cell membrane. In terms of biological role, cadherins are calcium-dependent cell adhesion proteins. They preferentially interact with themselves in a homophilic manner in connecting cells; cadherins may thus contribute to the sorting of heterogeneous cell types. The polypeptide is Cadherin-6 (Cdh6) (Mus musculus (Mouse)).